A 527-amino-acid polypeptide reads, in one-letter code: Probable T-complex protein 1 subunit beta (527 aa).

Belongs to the TCP-1 chaperonin family. In terms of assembly, heterooligomeric complex of about 850 to 900 kDa that forms two stacked rings, 12 to 16 nm in diameter.

The protein localises to the cytoplasm. In terms of biological role, molecular chaperone; assists the folding of proteins upon ATP hydrolysis. Known to play a role, in vitro, in the folding of actin and tubulin. This chain is Probable T-complex protein 1 subunit beta (cct2), found in Schizosaccharomyces pombe (strain 972 / ATCC 24843) (Fission yeast).